The primary structure comprises 94 residues: MLYLIIYDVPATKAGNKRRTRLFDLLSGYGKWRQFSVFECFLSVKQFAKLQTAMEKLIKLDEDAVCIYVLDENTVQRTITYGTPQPEKPGSIII.

D8 is a Mg(2+) binding site.

This sequence belongs to the CRISPR-associated endoribonuclease Cas2 protein family. Homodimer, forms a heterotetramer with a Cas1 homodimer. Requires Mg(2+) as cofactor.

CRISPR (clustered regularly interspaced short palindromic repeat), is an adaptive immune system that provides protection against mobile genetic elements (viruses, transposable elements and conjugative plasmids). CRISPR clusters contain sequences complementary to antecedent mobile elements and target invading nucleic acids. CRISPR clusters are transcribed and processed into CRISPR RNA (crRNA). Functions as a ssRNA-specific endoribonuclease. Involved in the integration of spacer DNA into the CRISPR cassette. The protein is CRISPR-associated endoribonuclease Cas2 1 of Synechocystis sp. (strain ATCC 27184 / PCC 6803 / Kazusa).